A 349-amino-acid chain; its full sequence is Sensory histidine kinase/phosphatase NtrB (349 aa).

The 74-residue stretch at 5–78 (IQPDAGQILN…SLAAGQGFTD (74 aa)) folds into the PAS domain. Positions 136–349 (GLAHEIKNPL…EFSVYLPIRK (214 aa)) constitute a Histidine kinase domain. His139 carries the post-translational modification Phosphohistidine; by autocatalysis. Lys329 lines the ATP pocket.

In terms of processing, autophosphorylated.

It localises to the cytoplasm. It catalyses the reaction ATP + protein L-histidine = ADP + protein N-phospho-L-histidine.. Member of the two-component regulatory system NtrB/NtrC, which controls expression of the nitrogen-regulated (ntr) genes in response to nitrogen limitation. Under conditions of nitrogen limitation, NtrB autophosphorylates and transfers the phosphoryl group to NtrC. In the presence of nitrogen, acts as a phosphatase that dephosphorylates and inactivates NtrC. The chain is Sensory histidine kinase/phosphatase NtrB (glnL) from Salmonella typhi.